The following is a 570-amino-acid chain: MSRLEAKKPSLCKSEPLTTERVRTTLSVLKRIVTSCYGPSGRLKQLHNGFGGYVCTTSQSSALLSHLLVTHPILKILTASIQNHVSSFSDCGLFTAILCCNLIENVQRLGLTPTTVIRLNKHLLSLCISYLKSETCGCRIPVDFSSTQILLCLVRSILTSKPACMLTRKETEHVSALILRAFLLTIPENAEGHIILGKSLIVPLKGQRVIDSTVLPGILIEMSEVQLMRLLPIKKSTALKVALFCTTLSGDTSDTGEGTVVVSYGVSLENAVLDQLLNLGRQLISDHVDLVLCQKVIHPSLKQFLNMHRIIAIDRIGVTLMEPLTKMTGTQPIGSLGSICPNSYGSVKDVCTAKFGSKHFFHLIPNEATICSLLLCNRNDTAWDELKLTCQTALHVLQLTLKEPWALLGGGCTETHLAAYIRHKTHNDPESILKDDECTQTELQLIAEAFCSALESVVGSLEHDGGEILTDMKYGHLWSVQADSPCVANWPDLLSQCGCGLYNSQEELNWSFLRSTRRPFVPQSCLPHEAVGSASNLTLDCLTAKLSGLQVAVETANLILDLSYVIEDKN.

192–199 serves as a coordination point for ATP; sequence GHIILGKS. Residues 198–370 form a substrate-binding apical domain region; sequence KSLIVPLKGQ…FHLIPNEATI (173 aa).

This sequence belongs to the TCP-1 chaperonin family. Component of a complex composed at least of MKKS, BBS10, BBS12, TCP1, CCT2, CCT3, CCT4, CCT5 and CCT8. Interacts with STUB1. Interacts with BBS2 (via coiled coil domain). Interacts with CCDC28B. Interacts with BBS12. Interacts with SMARCC1, a component of the SWI/SNF complexes; the interaction takes place predominantly in the cytoplasm and may modulate SMARCC1 location. Interacts with DLEC1. In terms of tissue distribution, widely expressed in adult and fetal tissues.

Its subcellular location is the cytoplasm. The protein localises to the cytoskeleton. The protein resides in the microtubule organizing center. It is found in the centrosome. It localises to the cytosol. Its subcellular location is the nucleus. Probable molecular chaperone that assists the folding of proteins upon ATP hydrolysis. Plays a role in the assembly of BBSome, a complex involved in ciliogenesis regulating transports vesicles to the cilia. May play a role in protein processing in limb, cardiac and reproductive system development. May play a role in cytokinesis. In Homo sapiens (Human), this protein is Molecular chaperone MKKS.